The sequence spans 187 residues: Fibroblast growth factor 4A (187 aa).

Positions 1-22 are cleaved as a signal peptide; the sequence is MTVPSALVPILLLGTAAVMVQC.

The protein belongs to the heparin-binding growth factors family.

The protein resides in the secreted. Functionally, plays an important role in the regulation of embryonic development, cell proliferation, and cell differentiation. Good candidate for an inducing factor with possible roles both in mesoderm induction at the blastula stage and in the formation of the anteroposterior axis at the gastrula stage. In Xenopus laevis (African clawed frog), this protein is Fibroblast growth factor 4A (fgf4-a).